The chain runs to 400 residues: Octopine dehydrogenase (400 aa).

Residues 10-13 (GGNG) and 35-38 (FADE) each bind NADH. Pyruvate contacts are provided by Gln118 and Thr143. Gln118 serves as a coordination point for substrate. NAD(+) is bound at residue Cys148. An L-arginine-binding site is contributed by Met206. His212 serves as a coordination point for pyruvate. His212 is a catalytic residue. Arg324 provides a ligand contact to NAD(+).

The protein belongs to the lysopine/nopaline/octopine/opine/vitopine dehydrogenases family.

It carries out the reaction D-octopine + NAD(+) + H2O = L-arginine + pyruvate + NADH + H(+). Catalyzes the reverse reaction of octopine dehydrogenation. Acts on L-arginine in preference to other substrates. This chain is Octopine dehydrogenase, found in Mizuhopecten yessoensis (Japanese scallop).